Reading from the N-terminus, the 371-residue chain is MAKQTPLYQQHLADGAKMVDFHGWMMPLHYGSQLDEHHIVRREAGIFDVSHMTIVDLHGARTREFLRYLLANDVAKLTQPGKALYTGMLNASGGVIDDLIVYFLTEDYFRLVVNSATREKDLAWIEQHAAPFGIEIREREDLALVAVQGPQAQEKVQAILKAKGLSDADVAAVASMKPFFGKQAGDFFVATTGYTGEAGYEIALPNEQVVDFWQQLLAAGVKPCGLGARDTLRLEAGMNLYGQDMDEGISPLAANMGWTIAWQPEDRQFIGREALTHQREKGTDQLVGLVLTEKGVLRNDLPVRFTDSDGVMREGVITSGSFSPTLGVSIALARVPLGIGEQAIVQIRNRELPVHVTKPGFVRAGKAIVQY.

It belongs to the GcvT family. The glycine cleavage system is composed of four proteins: P, T, L and H.

The enzyme catalyses N(6)-[(R)-S(8)-aminomethyldihydrolipoyl]-L-lysyl-[protein] + (6S)-5,6,7,8-tetrahydrofolate = N(6)-[(R)-dihydrolipoyl]-L-lysyl-[protein] + (6R)-5,10-methylene-5,6,7,8-tetrahydrofolate + NH4(+). In terms of biological role, the glycine cleavage system catalyzes the degradation of glycine. In Pectobacterium carotovorum subsp. carotovorum (strain PC1), this protein is Aminomethyltransferase.